Consider the following 698-residue polypeptide: Ubiquitin-like modifier-activating enzyme ATG7 (698 aa).

The short motif at 11–13 (FAP) is the FAP motif element. Residue lysine 41 forms a Glycyl lysine isopeptide (Lys-Gly) (interchain with G-Cter in ubiquitin) linkage. Cysteine 567 acts as the Glycyl thioester intermediate in catalysis. Position 693 is a phosphoserine (serine 693).

The protein belongs to the ATG7 family. In terms of assembly, homodimer. Interacts with ATG3; this interaction is essential for the transfer of ATG8-like proteins's thioester from ATG7 to ATG3 and plays a role in the conjugation of ATG12 to ATG5. Interacts with ATG12. Forms intermediate conjugates with GABARAPL1. Forms intermediate conjugates with ATG8-like proteins such as GABARAP, GABARAPL2 or MAP1LC3A. Interacts with EP300 acetyltransferase. Interacts with FOXO1. Post-translationally, acetylated by EP300. In terms of processing, polyubiquitinated on Lys-41 via 'Lys-63'-linked ubiquitin by TRIM32; this modification positiely regulates ATG8 and ATG12 activating enzyme activity leading to initiation of autophagy under metabolic stress. Widely expressed.

It is found in the cytoplasm. It localises to the preautophagosomal structure. In terms of biological role, E1-like activating enzyme involved in the 2 ubiquitin-like systems required for cytoplasm to vacuole transport (Cvt) and autophagy. Activates ATG12 for its conjugation with ATG5 as well as the ATG8 family proteins for their conjugation with phosphatidylethanolamine. Both systems are needed for the ATG8 association to Cvt vesicles and autophagosomes membranes. Required for autophagic death induced by caspase-8 inhibition. Facilitates LC3-I lipidation with phosphatidylethanolamine to form LC3-II which is found on autophagosomal membranes. Required for mitophagy which contributes to regulate mitochondrial quantity and quality by eliminating the mitochondria to a basal level to fulfill cellular energy requirements and preventing excess ROS production. Modulates p53/TP53 activity to regulate cell cycle and survival during metabolic stress. Also plays a key role in the maintenance of axonal homeostasis, the prevention of axonal degeneration, the maintenance of hematopoietic stem cells, the formation of Paneth cell granules, as well as in adipose differentiation. Plays a role in regulating the liver clock and glucose metabolism by mediating the autophagic degradation of CRY1 (clock repressor) in a time-dependent manner. The sequence is that of Ubiquitin-like modifier-activating enzyme ATG7 from Rattus norvegicus (Rat).